Here is a 1929-residue protein sequence, read N- to C-terminus: Intraflagellar transport protein 140 (1929 aa).

WD repeat units lie at residues 76 to 116 (QVQV…PSYK) and 119 to 158 (LHQE…YSFE). Residues 774-795 (LSTPDTGSPAVEAEESPQRQTR) form a disordered region. 3 LRR repeats span residues 957–980 (STSL…TFTK), 1019–1044 (ISLL…SLAE), and 1510–1532 (AQSL…LADI).

The protein localises to the cell projection. Its subcellular location is the cilium. The protein resides in the flagellum. It is found in the cytoplasm. It localises to the cytoskeleton. The protein localises to the flagellum axoneme. Its subcellular location is the flagellum basal body. Its function is as follows. Component of the intraflagellar transport complex A (IFT-A) involved in flagellar assembly. The sequence is that of Intraflagellar transport protein 140 from Giardia intestinalis (strain ATCC 50803 / WB clone C6) (Giardia lamblia).